Here is a 246-residue protein sequence, read N- to C-terminus: Anamorsin homolog (246 aa).

An N-terminal SAM-like domain region spans residues 1–124; it reads MRVVVVDLDG…ARGTAFSLKS (124 aa). A linker region spans residues 125–158; the sequence is RAVRVVTADAGWGADADVDDELIDESALLTELDV. Residues C168, C177, C180, and C182 each contribute to the [2Fe-2S] cluster site. The tract at residues 168–182 is fe-S binding site A; it reads CDVGAGKKACKNCTC. [4Fe-4S] cluster is bound by residues C206, C209, C217, and C220. 2 consecutive short sequence motifs (cx2C motif) follow at residues 206-209 and 217-220; these read CGNC and CAGC. The fe-S binding site B stretch occupies residues 206–220; the sequence is CGNCALGDAFRCAGC.

It belongs to the anamorsin family. Monomer. It depends on [2Fe-2S] cluster as a cofactor. Requires [4Fe-4S] cluster as cofactor.

Its subcellular location is the cytoplasm. The protein resides in the mitochondrion intermembrane space. Component of the cytosolic iron-sulfur (Fe-S) protein assembly (CIA) machinery. Required for the maturation of extramitochondrial Fe-S proteins. Part of an electron transfer chain functioning in an early step of cytosolic Fe-S biogenesis, facilitating the de novo assembly of a [4Fe-4S] cluster on the cytosolic Fe-S scaffold complex. Electrons are transferred from NADPH via a FAD- and FMN-containing diflavin oxidoreductase. Together with the diflavin oxidoreductase, also required for the assembly of the diferric tyrosyl radical cofactor of ribonucleotide reductase (RNR), probably by providing electrons for reduction during radical cofactor maturation in the catalytic small subunit. The polypeptide is Anamorsin homolog (Ostreococcus tauri).